The chain runs to 271 residues: Glutamate racemase (271 aa).

Substrate is bound by residues 10–11 and 42–43; these read DS and YG. Cys-73 serves as the catalytic Proton donor/acceptor. 74–75 lines the substrate pocket; that stretch reads NT. Cys-183 (proton donor/acceptor) is an active-site residue. 184 to 185 serves as a coordination point for substrate; it reads TH.

This sequence belongs to the aspartate/glutamate racemases family.

It carries out the reaction L-glutamate = D-glutamate. It functions in the pathway cell wall biogenesis; peptidoglycan biosynthesis. In terms of biological role, provides the (R)-glutamate required for cell wall biosynthesis. The sequence is that of Glutamate racemase from Lactococcus lactis subsp. cremoris (strain SK11).